We begin with the raw amino-acid sequence, 355 residues long: uncharacterized protein (355 aa).

The N-terminal stretch at 1–27 (MESPIRTARRTLPLLIGATCLVLALTG) is a signal peptide. Cysteine 28 carries the N-palmitoyl cysteine lipid modification. A lipid anchor (S-diacylglycerol cysteine) is attached at cysteine 28. A disordered region spans residues 33 to 53 (GPAQARPTPSASTSPKQAPAL). Over residues 39-48 (PTPSASTSPK) the composition is skewed to polar residues.

Its subcellular location is the cell membrane. This is an uncharacterized protein from Streptomyces coelicolor (strain ATCC BAA-471 / A3(2) / M145).